Reading from the N-terminus, the 295-residue chain is Diaminopimelate epimerase (295 aa).

Substrate-binding residues include Asn-11 and Asn-78. Residue Cys-87 is the Proton donor of the active site. Residues 88–89 (GN), Asn-163, Asn-199, and 220–221 (ER) contribute to the substrate site. Cys-229 serves as the catalytic Proton acceptor. A substrate-binding site is contributed by 230–231 (GT).

Belongs to the diaminopimelate epimerase family. As to quaternary structure, homodimer.

The protein resides in the cytoplasm. The catalysed reaction is (2S,6S)-2,6-diaminopimelate = meso-2,6-diaminopimelate. Its pathway is amino-acid biosynthesis; L-lysine biosynthesis via DAP pathway; DL-2,6-diaminopimelate from LL-2,6-diaminopimelate: step 1/1. Its function is as follows. Catalyzes the stereoinversion of LL-2,6-diaminopimelate (L,L-DAP) to meso-diaminopimelate (meso-DAP), a precursor of L-lysine and an essential component of the bacterial peptidoglycan. This chain is Diaminopimelate epimerase, found in Mycobacteroides abscessus (strain ATCC 19977 / DSM 44196 / CCUG 20993 / CIP 104536 / JCM 13569 / NCTC 13031 / TMC 1543 / L948) (Mycobacterium abscessus).